The sequence spans 123 residues: Sperm-associated antigen 11A (123 aa).

An N-terminal signal peptide occupies residues 1-25 (MRQRLLPSVTSLLLVALLFPGSSQA). An N-linked (GlcNAc...) asparagine glycan is attached at Asn29.

The protein belongs to the SPAG11 family.

It localises to the secreted. Functionally, has antimicrobial activity against E.coli. Plays a role in the defense response in the male reproductive tract, contributing to sperm maturation, storage and protection. This is Sperm-associated antigen 11A from Homo sapiens (Human).